A 459-amino-acid chain; its full sequence is GTPase Der (459 aa).

EngA-type G domains are found at residues 3–167 and 188–363; these read FTFA…PEPE and IRVA…AVWN. GTP-binding positions include 9–16, 56–60, 119–122, 194–201, 241–245, and 306–309; these read GRPNVGKS, DTAGL, NKSE, GRPNAGKS, and NKWD. In terms of domain architecture, KH-like spans 364-448; the sequence is TRVSTAALNR…PVRITLREKA (85 aa).

Belongs to the TRAFAC class TrmE-Era-EngA-EngB-Septin-like GTPase superfamily. EngA (Der) GTPase family. In terms of assembly, associates with the 50S ribosomal subunit.

GTPase that plays an essential role in the late steps of ribosome biogenesis. This Rhodopseudomonas palustris (strain HaA2) protein is GTPase Der.